We begin with the raw amino-acid sequence, 418 residues long: Serine proteinase inhibitor 2.4 (418 aa).

A signal peptide spans Met-1–Arg-28. N-linked (GlcNAc...) asparagine glycans are attached at residues Asn-23, Asn-38, Asn-104, and Asn-269.

This sequence belongs to the serpin family.

The protein localises to the secreted. This chain is Serine proteinase inhibitor 2.4, found in Apodemus sylvaticus (European woodmouse).